A 411-amino-acid chain; its full sequence is Tyrosine--tRNA ligase (411 aa).

The short motif at 48–57 is the 'HIGH' region element; sequence PTAPDIHLGH. Residues 232–236 carry the 'KMSKS' region motif; the sequence is KMSKS. Lys-235 serves as a coordination point for ATP. The 63-residue stretch at 347 to 409 folds into the S4 RNA-binding domain; the sequence is VLLPKVLFSA…GKRRFLKIIF (63 aa).

It belongs to the class-I aminoacyl-tRNA synthetase family. TyrS type 2 subfamily. Homodimer.

Its subcellular location is the cytoplasm. It catalyses the reaction tRNA(Tyr) + L-tyrosine + ATP = L-tyrosyl-tRNA(Tyr) + AMP + diphosphate + H(+). Catalyzes the attachment of tyrosine to tRNA(Tyr) in a two-step reaction: tyrosine is first activated by ATP to form Tyr-AMP and then transferred to the acceptor end of tRNA(Tyr). This is Tyrosine--tRNA ligase from Carboxydothermus hydrogenoformans (strain ATCC BAA-161 / DSM 6008 / Z-2901).